The primary structure comprises 54 residues: UPF0391 membrane protein Sde_0270 (54 aa).

Helical transmembrane passes span 6-26 (IVFL…IAGV) and 29-49 (GIAK…LVIG).

The protein belongs to the UPF0391 family.

The protein resides in the cell membrane. This chain is UPF0391 membrane protein Sde_0270, found in Saccharophagus degradans (strain 2-40 / ATCC 43961 / DSM 17024).